We begin with the raw amino-acid sequence, 188 residues long: EP300-interacting inhibitor of differentiation 1 (188 aa).

The disordered stretch occupies residues 1 to 122 (MSEMAELSEL…PEEEQLSGAG (122 aa)). Acidic residues-rich tracts occupy residues 53–64 (LEEEGPMEEEEA) and 94–117 (FESEDEGEEFDDWEDDYDYPEEEQ). Residues 55 to 121 (EEGPMEEEEA…YPEEEQLSGA (67 aa)) are interaction with NR0B2. Residues 179 to 183 (LGCDE) carry the LXCXE motif motif.

Interacts via its LXCXE motif with the entire pocket region of RB1. Interacts with EP300, NR0B2 and TRIM27.

The protein localises to the nucleus. Its subcellular location is the cytoplasm. In terms of biological role, interacts with RB1 and EP300 and acts as a repressor of MYOD1 transactivation. Inhibits EP300 and CBP histone acetyltransferase activity. May be involved in coupling cell cycle exit to the transcriptional activation of genes required for cellular differentiation. May act as a candidate coinhibitory factor for NR0B2 that can be directly linked to transcription inhibitory mechanisms. The chain is EP300-interacting inhibitor of differentiation 1 from Pongo abelii (Sumatran orangutan).